A 142-amino-acid chain; its full sequence is Large ribosomal subunit protein uL11 (142 aa).

This sequence belongs to the universal ribosomal protein uL11 family. Part of the ribosomal stalk of the 50S ribosomal subunit. Interacts with L10 and the large rRNA to form the base of the stalk. L10 forms an elongated spine to which L12 dimers bind in a sequential fashion forming a multimeric L10(L12)X complex. One or more lysine residues are methylated.

Functionally, forms part of the ribosomal stalk which helps the ribosome interact with GTP-bound translation factors. The chain is Large ribosomal subunit protein uL11 from Xylella fastidiosa (strain 9a5c).